The sequence spans 248 residues: MMKKILGVIPARYASSRFPGKPLAKIGDKTMIEWTYRNASRSSVLSELVVATDDVRIHEVVQKFGGRSVMTSSDHPSGTDRIIEVANQFSEYSIIVNIQGDEPGIEPELIDGVASLKASHPEWAMSTAAVPLLDFSHAIDFNRVKVIIDRNGKAIYFSRSLIPSQFKTTVPLYRHLGIYGYDRDFLLQYNSLPKSNLEESESLEQLRAIEAGYGIGIYLSKEAGLSVDTPADLEIVIEDFKKRKWISE.

It belongs to the KdsB family.

The protein localises to the cytoplasm. It carries out the reaction 3-deoxy-alpha-D-manno-oct-2-ulosonate + CTP = CMP-3-deoxy-beta-D-manno-octulosonate + diphosphate. It functions in the pathway nucleotide-sugar biosynthesis; CMP-3-deoxy-D-manno-octulosonate biosynthesis; CMP-3-deoxy-D-manno-octulosonate from 3-deoxy-D-manno-octulosonate and CTP: step 1/1. The protein operates within bacterial outer membrane biogenesis; lipopolysaccharide biosynthesis. Activates KDO (a required 8-carbon sugar) for incorporation into bacterial lipopolysaccharide in Gram-negative bacteria. This chain is 3-deoxy-manno-octulosonate cytidylyltransferase, found in Leptospira interrogans serogroup Icterohaemorrhagiae serovar copenhageni (strain Fiocruz L1-130).